The sequence spans 366 residues: Endogenous Bornavirus-like nucleoprotein 1 (366 aa).

The span at 1–15 shows a compositional bias: polar residues; sequence MSRPRNNPQTSSPQD. Residues 1 to 22 form a disordered region; that stretch reads MSRPRNNPQTSSPQDSTKDGSS.

As to expression, expression detected by RT-PCR in a few cell lines, including OL, HEK293T and MOLT-4. Not observed in HeLa cells.

Its function is as follows. May act as an RNA-binding protein. Highly homologous to the bornavirus nucleocapsid N protein that binds viral RNA and oligomerizes. This is Endogenous Bornavirus-like nucleoprotein 1 (EBLN1) from Homo sapiens (Human).